A 207-amino-acid polypeptide reads, in one-letter code: Large ribosomal subunit protein uL4 (207 aa).

The interval Thr53–Gly76 is disordered.

Belongs to the universal ribosomal protein uL4 family. As to quaternary structure, part of the 50S ribosomal subunit.

In terms of biological role, one of the primary rRNA binding proteins, this protein initially binds near the 5'-end of the 23S rRNA. It is important during the early stages of 50S assembly. It makes multiple contacts with different domains of the 23S rRNA in the assembled 50S subunit and ribosome. Its function is as follows. Forms part of the polypeptide exit tunnel. The chain is Large ribosomal subunit protein uL4 from Rickettsia bellii (strain OSU 85-389).